Reading from the N-terminus, the 420-residue chain is Probable glycosyltransferase YdaM (420 aa).

4 helical membrane-spanning segments follow: residues 4 to 24 (TLFF…MFLM), 299 to 319 (IIFD…GVIM), 332 to 352 (LHLS…FLFM), and 371 to 391 (FFIV…LVIY).

Belongs to the glycosyltransferase 2 family.

The protein resides in the cell membrane. The chain is Probable glycosyltransferase YdaM (ydaM) from Bacillus subtilis (strain 168).